A 223-amino-acid polypeptide reads, in one-letter code: MIPQTLEQLLSQAQSIAGLTFGELADELHIPVPIDLKRDKGWVGMLLERALGATAGSKAEQDFSHLGVELKTLPINAEGYPLETTFVSLAPLVQNSGIKWENSHVRHKLSCVLWIPIEGSRHIPLRERHIGAPIFWKPTAEQERQLKQDWEELMDLIVLGKLEQITARIGEVMQLRPKGANSRAVTKGIGKNGEIIDTLPLGFYLRKEFTAQILKAFLDVKPL.

The protein belongs to the MutH family.

Its subcellular location is the cytoplasm. Functionally, sequence-specific endonuclease that cleaves unmethylated GATC sequences. It is involved in DNA mismatch repair. The polypeptide is DNA mismatch repair protein MutH (Haemophilus influenzae (strain 86-028NP)).